Consider the following 526-residue polypeptide: Bifunctional purine biosynthesis protein PurH (526 aa).

One can recognise an MGS-like domain in the interval 1–145; the sequence is MIRTALLSVS…KNHQDVTVLI (145 aa).

This sequence belongs to the PurH family.

The enzyme catalyses (6R)-10-formyltetrahydrofolate + 5-amino-1-(5-phospho-beta-D-ribosyl)imidazole-4-carboxamide = 5-formamido-1-(5-phospho-D-ribosyl)imidazole-4-carboxamide + (6S)-5,6,7,8-tetrahydrofolate. It carries out the reaction IMP + H2O = 5-formamido-1-(5-phospho-D-ribosyl)imidazole-4-carboxamide. The protein operates within purine metabolism; IMP biosynthesis via de novo pathway; 5-formamido-1-(5-phospho-D-ribosyl)imidazole-4-carboxamide from 5-amino-1-(5-phospho-D-ribosyl)imidazole-4-carboxamide (10-formyl THF route): step 1/1. It participates in purine metabolism; IMP biosynthesis via de novo pathway; IMP from 5-formamido-1-(5-phospho-D-ribosyl)imidazole-4-carboxamide: step 1/1. The protein is Bifunctional purine biosynthesis protein PurH of Polynucleobacter necessarius subsp. necessarius (strain STIR1).